The chain runs to 209 residues: Protein GrpE (209 aa).

A compositionally biased stretch (polar residues) spans 1-13; the sequence is MSNDSSKAKQNQV. A disordered region spans residues 1-27; that stretch reads MSNDSSKAKQNQVDEAVEGEIITDNEN. Positions 15–27 are enriched in acidic residues; sequence EAVEGEIITDNEN.

It belongs to the GrpE family. In terms of assembly, homodimer.

Its subcellular location is the cytoplasm. Functionally, participates actively in the response to hyperosmotic and heat shock by preventing the aggregation of stress-denatured proteins, in association with DnaK and GrpE. It is the nucleotide exchange factor for DnaK and may function as a thermosensor. Unfolded proteins bind initially to DnaJ; upon interaction with the DnaJ-bound protein, DnaK hydrolyzes its bound ATP, resulting in the formation of a stable complex. GrpE releases ADP from DnaK; ATP binding to DnaK triggers the release of the substrate protein, thus completing the reaction cycle. Several rounds of ATP-dependent interactions between DnaJ, DnaK and GrpE are required for fully efficient folding. The protein is Protein GrpE of Shewanella sediminis (strain HAW-EB3).